Reading from the N-terminus, the 199-residue chain is Large ribosomal subunit protein eL13B (199 aa).

Phosphothreonine is present on residues Thr144 and Thr152.

The protein belongs to the eukaryotic ribosomal protein eL13 family. Component of the large ribosomal subunit (LSU). Mature yeast ribosomes consist of a small (40S) and a large (60S) subunit. The 40S small subunit contains 1 molecule of ribosomal RNA (18S rRNA) and 33 different proteins (encoded by 57 genes). The large 60S subunit contains 3 rRNA molecules (25S, 5.8S and 5S rRNA) and 46 different proteins (encoded by 81 genes).

It localises to the cytoplasm. Its function is as follows. Component of the ribosome, a large ribonucleoprotein complex responsible for the synthesis of proteins in the cell. The small ribosomal subunit (SSU) binds messenger RNAs (mRNAs) and translates the encoded message by selecting cognate aminoacyl-transfer RNA (tRNA) molecules. The large subunit (LSU) contains the ribosomal catalytic site termed the peptidyl transferase center (PTC), which catalyzes the formation of peptide bonds, thereby polymerizing the amino acids delivered by tRNAs into a polypeptide chain. The nascent polypeptides leave the ribosome through a tunnel in the LSU and interact with protein factors that function in enzymatic processing, targeting, and the membrane insertion of nascent chains at the exit of the ribosomal tunnel. The protein is Large ribosomal subunit protein eL13B of Saccharomyces cerevisiae (strain ATCC 204508 / S288c) (Baker's yeast).